The following is a 195-amino-acid chain: NADH-quinone oxidoreductase subunit B (195 aa).

[4Fe-4S] cluster contacts are provided by Cys-74, Cys-75, Cys-139, and Cys-169.

This sequence belongs to the complex I 20 kDa subunit family. NDH-1 is composed of 14 different subunits. Subunits NuoB, C, D, E, F, and G constitute the peripheral sector of the complex. The cofactor is [4Fe-4S] cluster.

It localises to the cell inner membrane. It carries out the reaction a quinone + NADH + 5 H(+)(in) = a quinol + NAD(+) + 4 H(+)(out). NDH-1 shuttles electrons from NADH, via FMN and iron-sulfur (Fe-S) centers, to quinones in the respiratory chain. The immediate electron acceptor for the enzyme in this species is believed to be ubiquinone. Couples the redox reaction to proton translocation (for every two electrons transferred, four hydrogen ions are translocated across the cytoplasmic membrane), and thus conserves the redox energy in a proton gradient. This is NADH-quinone oxidoreductase subunit B from Methylorubrum populi (strain ATCC BAA-705 / NCIMB 13946 / BJ001) (Methylobacterium populi).